Consider the following 281-residue polypeptide: N-acetyltransferase ECO1 (281 aa).

The segment at 33–57 (VKCDKCEMSYSSTSIEDRAIHEKYH) adopts a CCHH-type zinc-finger fold. Residues 86–105 (LSRSTGTITPLNSSPLKKSS) form a disordered region. Residues 95–105 (PLNSSPLKKSS) show a composition bias toward low complexity. Residue K223 is modified to N6-acetyllysine; by autocatalysis.

This sequence belongs to the acetyltransferase family. ECO subfamily. As to quaternary structure, binds specifically to CHL12, RFC1, RFC2, RFC3, RFC4, RFC5 and RAD24 when members of an RFC complex. Interacts with CHL1 and MPS3. Autoacetylates in vitro.

Its subcellular location is the nucleus. Functionally, required for establishment of sister chromatid cohesion during S phase but not for its further maintenance during G2 or M phases or for loading the cohesin complex onto DNA. Interacts with the three known alternate replication factor C (RFC) complexes, suggesting that these complexes have essential but redundant activity in cohesion establishment. Acts by acetylating the cohesin complex component SMC3. In vitro, possesses acetyltransferase activity where it can acetylate itself and components of the cohesin complex (MCD1, IRR1 and PDS5), but is unable to acetylate histones. In Saccharomyces cerevisiae (strain ATCC 204508 / S288c) (Baker's yeast), this protein is N-acetyltransferase ECO1 (ECO1).